The sequence spans 276 residues: Small ribosomal subunit protein uS2 (276 aa).

The interval 255–276 (ASATATAAPTEAGAPEPTTDPS) is disordered.

This sequence belongs to the universal ribosomal protein uS2 family.

This chain is Small ribosomal subunit protein uS2, found in Mycolicibacterium paratuberculosis (strain ATCC BAA-968 / K-10) (Mycobacterium paratuberculosis).